We begin with the raw amino-acid sequence, 96 residues long: Large ribosomal subunit protein uL23 (96 aa).

The protein belongs to the universal ribosomal protein uL23 family. In terms of assembly, part of the 50S ribosomal subunit. Contacts protein L29, and trigger factor when it is bound to the ribosome.

Its function is as follows. One of the early assembly proteins it binds 23S rRNA. One of the proteins that surrounds the polypeptide exit tunnel on the outside of the ribosome. Forms the main docking site for trigger factor binding to the ribosome. The sequence is that of Large ribosomal subunit protein uL23 from Oleidesulfovibrio alaskensis (strain ATCC BAA-1058 / DSM 17464 / G20) (Desulfovibrio alaskensis).